The sequence spans 3790 residues: Transcription-associated protein 1 (3790 aa).

HEAT repeat units lie at residues 98–136, 335–381, 740–778, 1185–1223, 1332–1370, and 1826–1864; these read RQHV…HFRP, TDLR…HVRQ, DLLY…ELCL, AKAT…IQSK, IGYK…GVTL, and AIHK…AMPL. In terms of domain architecture, FAT spans 2610–3173; it reads LLAYLGKSHN…YFPIRTLYLT (564 aa). Positions 3429 to 3753 constitute a PI3K/PI4K catalytic domain; sequence MPRVEIVQKN…AVDIIMTRFN (325 aa). The interval 3435–3441 is G-loop; it reads VQKNNTA. Residues 3616 to 3624 are catalytic loop; that stretch reads NLTRLNADM. Positions 3636–3661 are activation loop; the sequence is ISYFKFDVNDDKCQLNQHRPVPFRLT. One can recognise an FATC domain in the interval 3758-3790; that stretch reads FDSIENKKISVLVQSATNIDNLCRMDPAWHPWL.

The protein belongs to the PI3/PI4-kinase family. TRA1 subfamily. Component of the Tip60 chromatin-remodeling complex which contains the catalytic subunit Tip60 and the subunits Domino, Tra1, Brd8, E(Pc), DMAP1, Pontin, Reptin, Ing3, Act87E, BAP55, Mrg15, MrgBP, Gas41 and YL-1. Probable component of some SAGA complex. Interacts with Spt3, Gcn5, Ada3 and Ada2b. As to expression, ubiquitous.

It is found in the nucleus. The protein resides in the cytoplasm. Its subcellular location is the chromosome. Part of the Tip60 chromatin-remodeling complex which is involved in DNA repair. Upon induction of DNA double-strand breaks, this complex acetylates phosphorylated H2AV in nucleosomes and exchanges it with unmodified H2AV. During wing development, required for activity of Notch and its coactivator mam. Function in promoting mam function is likely to involve both the Tip60 and SAGA complexes. This Drosophila melanogaster (Fruit fly) protein is Transcription-associated protein 1 (Nipped-A).